The chain runs to 455 residues: Argininosuccinate lyase (455 aa).

It belongs to the lyase 1 family. Argininosuccinate lyase subfamily.

It localises to the cytoplasm. It carries out the reaction 2-(N(omega)-L-arginino)succinate = fumarate + L-arginine. It participates in amino-acid biosynthesis; L-arginine biosynthesis; L-arginine from L-ornithine and carbamoyl phosphate: step 3/3. The sequence is that of Argininosuccinate lyase from Shewanella sp. (strain MR-4).